We begin with the raw amino-acid sequence, 134 residues long: Secreted RxLR effector protein 1 (134 aa).

Positions 1 to 22 are cleaved as a signal peptide; sequence MFCRSPLVAVILLVLATHIVLA. The tract at residues 32–60 is disordered; it reads SETVPSDSSQTTRKSTRRTTSVDNKRRLR. The segment covering 37–52 has biased composition (low complexity); sequence SDSSQTTRKSTRRTTS. A RxLR-dEER motif is present at residues 57–79; it reads RRLRQQIMGKDGPVVNDVHAEER.

It belongs to the RxLR effector family.

The protein resides in the secreted. It is found in the host nucleus. Its function is as follows. Effector that acts as a broad suppressor of cell death to interrupt plant immunity. Inhibits cell death induced by cell death-inducing proteins, including the PAMP elicitor INF1 from P.infestans. This Plasmopara viticola (Downy mildew of grapevine) protein is Secreted RxLR effector protein 1.